The chain runs to 557 residues: Urocanate hydratase (557 aa).

A disordered region spans residues 1-20; sequence MSNPRHNEREVRSPRGDELN. NAD(+) is bound by residues 52 to 53, Q130, 176 to 178, E196, R201, 242 to 243, 263 to 267, 273 to 274, and Y322; these read GG, GMG, NA, QTSAH, and YL. C410 is an active-site residue. G492 contacts NAD(+).

The protein belongs to the urocanase family. NAD(+) serves as cofactor.

Its subcellular location is the cytoplasm. It carries out the reaction 4-imidazolone-5-propanoate = trans-urocanate + H2O. It participates in amino-acid degradation; L-histidine degradation into L-glutamate; N-formimidoyl-L-glutamate from L-histidine: step 2/3. Catalyzes the conversion of urocanate to 4-imidazolone-5-propionate. In Brucella ovis (strain ATCC 25840 / 63/290 / NCTC 10512), this protein is Urocanate hydratase.